We begin with the raw amino-acid sequence, 1854 residues long: MTTTITAKIAQRQQQHQQHQQQQLQHQQQQQQQQQHQPTSSMNGFRITGYPAAATPPARSNPIYAKPNAHELDLHISESLLYPGSTTQQQQALQSSPGPPPQLTSMLPSSGLPGAAQPIALKGNNPFLNSPSPTEAAPGVPTGLSSAQPATSASSGNYEMPEYAEPSRLRGLKQRPHSIAVGGSPAQSSFVDYNAQQQQRLLQLSRQQQQLRNAVTAAASTANGGDKETLYAALFQQYRQSPTNGQPAPPVPLHRKPAAAPVVPRRSQSTPRPPLQQQQQQQQAGINGQINGNGNQRPRSLDRFNGGLQSEAPPIPLRRFPNGNGNNNNGTLSRQKSPKKSSSADNMLMSPAGSQVNTMRHSISFHGGQETENGSKAEQTRPMSYAAPAPDQAYLEHQLRAYSEQLRTITESVRKYSEQAKLLSELKRQQQLAKQSQTNLNLLTPTTCNNSTGSNGNNNFQPNMISPEIVSKSLASLSTSQANEAQTPSNQLRLFLDNIRSSMRQEYQQHMPDDVLKPTSTLKRNGTDSLVTSNTAAKPEVEATPTPSDQLRQFLDAIRANKIPESVDKPKMTSSQTLDSFISKPLQMPDVTSGTPGGGVVGGQAASGGVAVNGQTNGIPTRRRPKSSIIPSSSNGKLEQREHSLVTSESFHQISDNLRLMSEDLQALSPSKAIPSSASSNSLKSLAANGGSSLTTELRVITSSPYSTSPKLQQMVMSKSNSSLGSVTTPSSATTTPSTAPMITDFNEILDSFQAMADKYKSKGSYDYLRKCSEALRQHSLQLKLQQQHQAHQQQQLPAHQQQQHQQQQQQQIQNGFASDDNSSSCSTTPGSIREAVQNLLLQPRNGFQILDDRMRLFIDIIDSQDRLSQDLQSEIETHRVVYDRLDGTGRKLLGSLTSQEDAVMLQRRLDEMNQRWNNLKSKSIAIRNRLESNSEHWNALLLSLRELTEWVIRKDTELSTLGLGPVRGDAVSLQKQLDDHKAFRRQLEDKRPIVESNLTSGRQYIANEAAVSDTSDTEANHDSDSRYMSAEEQSRELTRSIRREVGKLSEQWNNLIDRSDNWKHRLDEYMTKMRQFQKILEDLSSRVALAEQTKTSWLPPSSVGEANEQMQQLQRLRDKMTTASALLDDCNEQQSFFTANQVLVPTPCLSKLEDLNTRMKLLQIAMDERQKVLCQAGAQQTHENGDDGRTTSNSGTIGPLPNLGQSVKPPWERATTAANVPYYIDHERETTHWDHPEMIELMKGLADLNEIRFSAYRTAMKLRSVQKRLALDRISMSTACESFDRHGLRAQNDKLIDIPDMTTVLHSLYVTIDKIDLTLMLDLAINWILNVYDSQRTGQIRVLSFKVGLVLLCKGHLEEKYRYLFRLVADTDRRADQRRLGLLLHDCIQVPRQLGEVAAFGGSNIEPSVRSCLEQAGISQEAIDGNQDISIELQHFLGWLQHEPQSLVWLPVLHRLAAAEAAKHQAKCNICKEYPIVGFRYRCLKCFNFDMCQKCFFFGRNAKNHKLTHPMHEYCTTTTSTEDVRDFTRALKNKFKSRKYFKKHPRVGYLPVQSVLEGDALESPAPSPQHTTHQLQNDMHSRLEMYASRLAQVEYGGTGSNSTPDSDDEHQLIAQYCQALPGTSNGSAPKSPVQVMAAMDAEQREELEAIIRDLEEENANLQAEYQQLCSKEQSGMPEDSNGMQHSSSSMTGLSGQGEQGQDMMAEAKLLRQHKGRLEARMQILEDHNRQLEAQLQRLRQLLDEPNGGGSSATSSGLPSAPGSALNSKPNTLQTRSVTASQLNTDSPAKMNQQNGHYEHNSKNSSGLVTVITEQELESINDDLEDSSSSNTTNTTTTTTTTATTEKTCVELQK.

Disordered stretches follow at residues 1–65 (MTTT…PIYA), 84–161 (GSTT…YEMP), 240–352 (QSPT…MSPA), 516–548 (LKPT…PTPS), 595–650 (TPGG…TSES), 716–740 (VMSK…PSTA), 783–830 (LKLQ…STTP), and 1012–1036 (VSDT…EQSR). 2 stretches are compositionally biased toward low complexity: residues 11–37 (QRQQ…QQHQ) and 84–96 (GSTT…LQSS). The segment covering 143-157 (GLSSAQPATSASSGN) has biased composition (polar residues). Positions 276–296 (QQQQQQQQAGINGQINGNGNQ) are enriched in low complexity. Polar residues-rich tracts occupy residues 331–345 (TLSR…SSAD) and 518–536 (PTST…SNTA). Residues 595–606 (TPGGGVVGGQAA) are compositionally biased toward gly residues. A compositionally biased stretch (polar residues) spans 716 to 727 (VMSKSNSSLGSV). Low complexity-rich tracts occupy residues 728–740 (TTPS…PSTA) and 783–814 (LKLQ…QQIQ). Residues 815 to 830 (NGFASDDNSSSCSTTP) are compositionally biased toward polar residues. Spectrin repeat units follow at residues 936-1069 (EHWN…RLDE) and 1072-1176 (TKMR…VLCQ). Residues 1179–1209 (AQQTHENGDDGRTTSNSGTIGPLPNLGQSVK) form a disordered region. One can recognise a WW domain in the interval 1206–1239 (QSVKPPWERATTAANVPYYIDHERETTHWDHPEM). A ZZ-type zinc finger spans residues 1464–1520 (KHQAKCNICKEYPIVGFRYRCLKCFNFDMCQKCFFFGRNAKNHKLTHPMHEYCTTTT). Zn(2+) contacts are provided by Cys-1469, Cys-1472, Cys-1484, Cys-1487, Cys-1493, Cys-1496, His-1506, and His-1510. At Ser-1564 the chain carries Phosphoserine. Disordered stretches follow at residues 1673 to 1701 (EQSG…GEQG) and 1744 to 1854 (DEPN…ELQK). Polar residues-rich tracts occupy residues 1682–1694 (NGMQ…MTGL) and 1765–1796 (ALNS…QQNG). The segment covering 1815-1826 (QELESINDDLED) has biased composition (acidic residues). Positions 1827-1845 (SSSSNTTNTTTTTTTTATT) are enriched in low complexity.

Component of the dystrophin associated protein complex (DAPC). Interacts with Dg, via the Dg WW domain binding sites. In terms of tissue distribution, during embryogenesis and in third instar larvae, expression is seen in pericardial cells of the dorsal vessel and in the ventral nerve cord. Expression is absent from both the embryonic and larval musculature.

The protein localises to the cell membrane. It is found in the sarcolemma. The protein resides in the cytoplasm. Its subcellular location is the cytoskeleton. In terms of biological role, required for the maintenance of appropriate synaptic retrograde communication and the stabilization of muscle cell architecture or physiology. May play a role in anchoring the cytoskeleton to the plasma membrane. The sequence is that of Dystrophin, isoform D (Dys) from Drosophila melanogaster (Fruit fly).